The following is a 1309-amino-acid chain: Disease resistance protein RPP2A (1309 aa).

One can recognise a TIR 1 domain in the interval 9–173 (RRYDVFPSFS…MVADDVSKKL (165 aa)). E84 is a catalytic residue. The region spanning 187-418 (EAHLEAMSSI…FKKTLRNYLP (232 aa)) is the NB-ARC 1 domain. Residues 488 to 585 (PNRRHSNDDW…KECILVFSCH (98 aa)) form the ALOG domain. The region spanning 574–737 (REKECILVFS…EVVRNASLRL (164 aa)) is the TIR 2 domain. One can recognise an NB-ARC 2 domain in the interval 755–987 (SQSTDVEIMG…IFLDLACFFR (233 aa)). Residues 1114–1141 (LPHGLDTLPDELSLLHWENYPLVYLPQK) adopt a coiled-coil conformation. LRR repeat units lie at residues 1145–1167 (VNLV…KKNL), 1168–1195 (EKLK…NLEH), 1214–1237 (CGKL…MVDL), 1238–1258 (TTLK…QDFA), 1259–1283 (PNLE…NLTE), and 1285–1307 (VTLD…EIIR).

This sequence belongs to the disease resistance TIR-NB-LRR family.

It catalyses the reaction NAD(+) + H2O = ADP-D-ribose + nicotinamide + H(+). Functionally, disease resistance protein that cooperates with RPP2B to confer resistance to Hyaloperonospora parasitica isolate Cala2. This chain is Disease resistance protein RPP2A, found in Arabidopsis thaliana (Mouse-ear cress).